The chain runs to 304 residues: L-xylo-3-hexulose reductase (304 aa).

NADP(+) contacts are provided by isoleucine 19, aspartate 68, and asparagine 107. Catalysis depends on proton donor residues serine 163 and serine 164. Residues tyrosine 177, lysine 181, and alanine 209 each contribute to the NADP(+) site. The active-site Proton acceptor is tyrosine 177. Lysine 181 functions as the Lowers pKa of active site Tyr in the catalytic mechanism.

The protein belongs to the short-chain dehydrogenases/reductases (SDR) family.

It catalyses the reaction D-sorbitol + NADP(+) = L-xylo-3-hexulose + NADPH + H(+). It functions in the pathway carbohydrate degradation. L-xylulose reductase involved in the catabolism of D-galactose through an oxidoreductive pathway. Catalyzes the NADPH-dependent reduction of L-xylo-3-hexulose. Is also active with D-ribulose and L-xylulose, and to a lesser extent with D-xylulose, D-fructose and L- and D-sorbose. In the reverse reaction, shows activity with D-sorbitol and D-mannitol, low activity with xylitol, but no activity with galactitol, ribitol, and L- and D-arabitol. The polypeptide is L-xylo-3-hexulose reductase (Hypocrea jecorina (strain QM6a) (Trichoderma reesei)).